The primary structure comprises 97 residues: Protein RALF-like 2 (97 aa).

An N-terminal signal peptide occupies residues 1–25 (MEARHMLVTILLLSFVFMNIMKVEA). Intrachain disulfides connect C42/C49 and C61/C67.

The protein belongs to the plant rapid alkalinization factor (RALF) family.

It localises to the secreted. Functionally, cell signaling peptide that may regulate plant stress, growth, and development. Mediates a rapid alkalinization of extracellular space by mediating a transient increase in the cytoplasmic Ca(2+) concentration leading to a calcium-dependent signaling events through a cell surface receptor and a concomitant activation of some intracellular mitogen-activated protein kinases. This chain is Protein RALF-like 2 (RALFL2), found in Arabidopsis thaliana (Mouse-ear cress).